A 186-amino-acid chain; its full sequence is UPF0301 protein Neut_0448 (186 aa).

It belongs to the UPF0301 (AlgH) family.

The chain is UPF0301 protein Neut_0448 from Nitrosomonas eutropha (strain DSM 101675 / C91 / Nm57).